The following is a 955-amino-acid chain: MTRKNTTTNPWAKFHGPNLGYVIEQYDLYVTGAGSVDPELQELFEIFGAPSFQDDVVTGDNTATHFSPQNTGNIEKILKVVQLVEQIRSFGHTLAHINPMEDAANGQSLLEKAMNELSDADLKAIPAKTVWQDAPEGIHTALDVIHRLKEVYTQTLAYEFSHIQDSEERAWLHQMVESNSLRQPLSNQKRTALLKRLTAVEGFEQFLHKTFVGQKRFSIEGVDMLVPVLDEIVLEGAKNGVEDVMIGMAHRGRLSVLAHVLEKPYSHMFAEFKHAKIEGAVANSGWTGDVKYHLGREQVVSNEEVSTRVTLANNPSHLEFVNPVVEGFARAAQENRKKSGLPEQDTSKSFVILVHGDAAFPGQGIVSETLNLSRLNAYQTGGTIHVIANNAVGFTTDSYDSRSTKYSSDLAKGFDIPIVHVNADDPEACLAAANLAIQYRMLFKKDFLIDLIGYRRYGHNEMDDPAVTQPQVYKKIKNHPTVRAIYADQLQAAGVLNADEIETITQFTQEQLKSDYAQVPPADTSDATIHVKVPDVVAKGIQSIDTGVELDSLRAINEGLLSWPEGFNVYPKVKKILERRKDALEENGKIEWALAESLAFASILQEGTPIRLTGQDSQRGTFAHRHIVLHDTDTNETYSPLHRLPNINASFSVHNSPLSEAAVVGYEYGYNVFAPETLVMWEAQYGDFSNTAQALFDQYVSAGRAKWGQKSGLVLLLPHGYEGQGPEHSSARPERFLQLAAENNWTVANLTSAAQYFHILRRQASILGTEAVRPLVLMTPKSLLRHPLTLSTASQLSEGRFQPALEQENLGMKPNKVKRLVLSTGKMAIDLAAEIESGKHEYNLDEIHIVRIEQLYPFPAEKVQSIIKRFKNLEEIIWVQEEPRNMGAWHYMAPILFELAGDKVKTGYIGRPDRSSPSGGDPFAHKAEQELIVSHALDVKYNFRQDKLEIEVFSN.

It belongs to the alpha-ketoglutarate dehydrogenase family. As to quaternary structure, homodimer. Part of the 2-oxoglutarate dehydrogenase (OGDH) complex composed of E1 (2-oxoglutarate dehydrogenase), E2 (dihydrolipoamide succinyltransferase) and E3 (dihydrolipoamide dehydrogenase); the complex contains multiple copies of the three enzymatic components (E1, E2 and E3). Thiamine diphosphate is required as a cofactor.

It carries out the reaction N(6)-[(R)-lipoyl]-L-lysyl-[protein] + 2-oxoglutarate + H(+) = N(6)-[(R)-S(8)-succinyldihydrolipoyl]-L-lysyl-[protein] + CO2. In terms of biological role, E1 component of the 2-oxoglutarate dehydrogenase (OGDH) complex which catalyzes the decarboxylation of 2-oxoglutarate, the first step in the conversion of 2-oxoglutarate to succinyl-CoA and CO(2). The protein is 2-oxoglutarate dehydrogenase E1 component of Bacillus cereus (strain AH187).